A 464-amino-acid chain; its full sequence is uncharacterized protein (464 aa).

Positions 13–71 (MLKVSDIIQIKIDKIVFGGEGLGYYNGFAVFVPMSIPEDELEIEIISIKKTYARGLIKN) constitute a TRAM domain. Positions 295, 324, 345, and 393 each coordinate S-adenosyl-L-methionine. Residue Cys-420 is the Nucleophile of the active site.

Belongs to the class I-like SAM-binding methyltransferase superfamily. RNA M5U methyltransferase family.

This is an uncharacterized protein from Fusobacterium nucleatum subsp. nucleatum (strain ATCC 25586 / DSM 15643 / BCRC 10681 / CIP 101130 / JCM 8532 / KCTC 2640 / LMG 13131 / VPI 4355).